Here is a 502-residue protein sequence, read N- to C-terminus: Maturase K (502 aa).

This sequence belongs to the intron maturase 2 family. MatK subfamily.

It localises to the plastid. The protein localises to the chloroplast. In terms of biological role, usually encoded in the trnK tRNA gene intron. Probably assists in splicing its own and other chloroplast group II introns. The chain is Maturase K from Tilia americana (American basswood).